A 361-amino-acid chain; its full sequence is MTGKKSSREKRRKRSSQEAAAALAAPDIVPALASGSSGSTSGCGSAGGCGSVSCCGNANFSGSVTGGGSGGSCWGGSSVERSERRKRRSTDSSSVSGSLQQETKYILPTLEKELFLAEHSDLEEGGLDLTVSLKPVSFYISDKKEMLQQCFCIIGEKKLQKMLPDVLKNCSIEEIKKLCQEQLELLSEKKILKILEGDNGMDSDMEEEADDGSKMGSDLVSQQDICIDSASSVRENKQPEGLELKQGKGEDSDVLSINADAYDSDIEGPCNEEAAAPEAPENTVQSEAGQIDDLEKDIEKSVNEILGLAESSPNEPKAATLAVPPPEDVQPSAQQLELLELEMRARAIKALMKAGDIKKPA.

Residues 1-14 show a composition bias toward basic residues; that stretch reads MTGKKSSREKRRKR. 2 disordered regions span residues 1 to 28 and 67 to 100; these read MTGK…APDI and GGSG…GSLQ. Residues 19 to 28 are compositionally biased toward low complexity; sequence AAAALAAPDI. Phosphoserine is present on S89. Phosphothreonine is present on T90. K104 is covalently cross-linked (Glycyl lysine isopeptide (Lys-Gly) (interchain with G-Cter in SUMO2)). Residues S120 and S203 each carry the phosphoserine modification. Disordered stretches follow at residues 198–218 and 230–331; these read DNGM…MGSD and ASSV…DVQP. Over residues 199–210 the composition is skewed to acidic residues; sequence NGMDSDMEEEAD. The span at 234–251 shows a compositional bias: basic and acidic residues; that stretch reads RENKQPEGLELKQGKGED. Over residues 272–281 the composition is skewed to low complexity; it reads EEAAAPEAPE. Residues 281-311 adopt a coiled-coil conformation; that stretch reads ENTVQSEAGQIDDLEKDIEKSVNEILGLAES. A Phosphoserine modification is found at S312.

Ubiquitous.

Functionally, anti-apoptotic protein that modulates a caspase-10 dependent mitochondrial caspase-3/9 feedback amplification loop. The chain is Caspase activity and apoptosis inhibitor 1 (CAAP1) from Homo sapiens (Human).